The primary structure comprises 357 residues: MRRQLRSRRAPSFPYSYRYRLDDPDEANQNYLADEEEEAEEEARVTVVPKSEEEEEEEEKEEEEEEEKEEEEGQGQPTGNAWWQKLQIMSEYLWDPERRMFLARTGQSWSLILLIYFFFYASLAAVITLCMYTLFLTISPYIPTFTERVKPPGVMIRPFAHSLNFNFNVSEPDTWQHYVISLNGFLQGYNDSLQEEMNVDCPPGQYFIQDGNEDEDKKACQFKRSFLKNCSGLEDPTFGYSTGQPCILLKMNRIVGFRPELGDPVKVSCKVQRGDENDIRSISYYPESASFDLRYYPYYGKLTHVNYTSPLVAMHFTDVVKNQAVPVQCQLKGKGVINDVINDRFVGRVIFTLNIET.

Residues 1-110 (MRRQLRSRRA…FLARTGQSWS (110 aa)) are Nuclear-facing. Residues 15–80 (YSYRYRLDDP…EEGQGQPTGN (66 aa)) are disordered. The span at 52–73 (EEEEEEEEKEEEEEEEKEEEEG) shows a compositional bias: acidic residues. Residues 111–131 (LILLIYFFFYASLAAVITLCM) form a helical; Signal-anchor for type II membrane protein membrane-spanning segment. The Perinuclear space segment spans residues 132–357 (YTLFLTISPY…RVIFTLNIET (226 aa)).

The protein belongs to the X(+)/potassium ATPases subunit beta family. In terms of assembly, associates with a SMAD7-transcriptional complex. Interacts with SNW1 and TOR1AIP1. According to PubMed:17592128, does not associate with known Na,K-ATPase alpha-subunits. Highly expressed in skeletal muscle and at a lower level in heart.

Its subcellular location is the nucleus inner membrane. In terms of biological role, may act as a transcriptional coregulator during muscle development through its interaction with SNW1. Has lost its ancestral function as a Na,K-ATPase beta-subunit. The chain is Protein ATP1B4 (ATP1B4) from Homo sapiens (Human).